Reading from the N-terminus, the 412-residue chain is MSGQLPSSMVALPRQGIIILTYVLAALELTCLFMQFSIIPYLSRTLGLDSVSFGYLQTTFGVLQLLGGPVFGRFADQRGARAALTLSFLAASALYLLLVASCSPALPGVFLLFASRLPAALMHTLPAAQMVITDLTAPTKRPTALSRLGLCFGIGVIFGSLLGGTLSTAYGIQCPAFLAFVVTLLGAVLSFTCIPVTTKEASVQSAHQGGTSVFDLKAISRLLLLPRVLPVFLVKVISGFPSGLFMVMFSIISMDFFQLEAAQAGYLMSFFGILQMMIQGLVIGRLSTRFPEEALLRSSVLVFAVVGLGMALMSNVFHFCLLLPGLVFSLCALNIVTDSMLTKAVSASDTGTMLGLCASVHPLTRTVGPTLGGLLYRSYGVSILGHVQLMVNLLVLLVLWKKPLSQKGDKAR.

10 helical membrane-spanning segments follow: residues 16 to 36 (GIII…FMQF), 51 to 71 (VSFG…GPVF), 117 to 137 (LPAA…DLTA), 148 to 168 (LGLC…TLST), 176 to 196 (AFLA…CIPV), 232 to 252 (FLVK…FSII), 264 to 284 (AGYL…LVIG), 294 to 314 (ALLR…ALMS), 316 to 336 (VFHF…LNIV), and 380 to 400 (GVSI…LVLW).

Belongs to the major facilitator (TC 2.A.1) superfamily. Organic cation transporter (TC 2.A.1.19) family.

The protein localises to the apical cell membrane. Its function is as follows. May act as a transporter of organic cations based on a proton efflux antiport mechanism. May play a role in the transport of chloroquine and quinidine-related compounds in kidney. Plays a role in the regulation of lipid metabolism. This chain is Solute carrier family 22 member 18 (Slc67a1), found in Rattus norvegicus (Rat).